Consider the following 329-residue polypeptide: GTP 3',8-cyclase (329 aa).

A Radical SAM core domain is found at A8–A234. R17 contacts GTP. Residues C24 and C28 each contribute to the [4Fe-4S] cluster site. Y30 serves as a coordination point for S-adenosyl-L-methionine. C31 lines the [4Fe-4S] cluster pocket. GTP is bound at residue R68. G72 is an S-adenosyl-L-methionine binding site. A GTP-binding site is contributed by T99. Residue S123 participates in S-adenosyl-L-methionine binding. K160 serves as a coordination point for GTP. M194 is an S-adenosyl-L-methionine binding site. Residues C257 and C260 each coordinate [4Fe-4S] cluster. GTP is bound at residue R262 to R264. [4Fe-4S] cluster is bound at residue C274.

This sequence belongs to the radical SAM superfamily. MoaA family. As to quaternary structure, monomer and homodimer. The cofactor is [4Fe-4S] cluster.

The enzyme catalyses GTP + AH2 + S-adenosyl-L-methionine = (8S)-3',8-cyclo-7,8-dihydroguanosine 5'-triphosphate + 5'-deoxyadenosine + L-methionine + A + H(+). Its pathway is cofactor biosynthesis; molybdopterin biosynthesis. Its function is as follows. Catalyzes the cyclization of GTP to (8S)-3',8-cyclo-7,8-dihydroguanosine 5'-triphosphate. The polypeptide is GTP 3',8-cyclase (Escherichia coli O127:H6 (strain E2348/69 / EPEC)).